Consider the following 207-residue polypeptide: 3-isopropylmalate dehydratase small subunit (207 aa).

Belongs to the LeuD family. LeuD type 1 subfamily. As to quaternary structure, heterodimer of LeuC and LeuD.

It catalyses the reaction (2R,3S)-3-isopropylmalate = (2S)-2-isopropylmalate. It participates in amino-acid biosynthesis; L-leucine biosynthesis; L-leucine from 3-methyl-2-oxobutanoate: step 2/4. Its function is as follows. Catalyzes the isomerization between 2-isopropylmalate and 3-isopropylmalate, via the formation of 2-isopropylmaleate. The sequence is that of 3-isopropylmalate dehydratase small subunit from Gluconacetobacter diazotrophicus (strain ATCC 49037 / DSM 5601 / CCUG 37298 / CIP 103539 / LMG 7603 / PAl5).